We begin with the raw amino-acid sequence, 415 residues long: Squalene synthase 12 (415 aa).

2 helical membrane passes run 281–301 and 391–411; these read AIFR…ALCF and LIAI…SNLL.

It belongs to the phytoene/squalene synthase family. It depends on Mg(2+) as a cofactor. Requires Mn(2+) as cofactor.

It localises to the endoplasmic reticulum membrane. The enzyme catalyses 2 (2E,6E)-farnesyl diphosphate + NADH + H(+) = squalene + 2 diphosphate + NAD(+). The catalysed reaction is 2 (2E,6E)-farnesyl diphosphate + NADPH + H(+) = squalene + 2 diphosphate + NADP(+). Its pathway is terpene metabolism; lanosterol biosynthesis; lanosterol from farnesyl diphosphate: step 1/3. Component of the triterpene saponins (e.g. ginsenosides or panaxosides) and phytosterols biosynthetic pathways. Catalyzes the biosynthesis of squalene. This Panax ginseng (Korean ginseng) protein is Squalene synthase 12.